The sequence spans 391 residues: Elongation factor Tu (391 aa).

Positions 10–201 (KPHVNIGTIG…AVDEYIPTPA (192 aa)) constitute a tr-type G domain. A G1 region spans residues 19–26 (GHVDHGKT). 19–26 (GHVDHGKT) contributes to the GTP binding site. Residue T26 coordinates Mg(2+). The segment at 55–59 (GITIS) is G2. Positions 76 to 79 (DCPG) are G3. GTP-binding positions include 76-80 (DCPGH) and 131-134 (NKVD). The segment at 131–134 (NKVD) is G4. The G5 stretch occupies residues 169–171 (SAL).

The protein belongs to the TRAFAC class translation factor GTPase superfamily. Classic translation factor GTPase family. EF-Tu/EF-1A subfamily. As to quaternary structure, monomer.

The protein localises to the cytoplasm. It carries out the reaction GTP + H2O = GDP + phosphate + H(+). GTP hydrolase that promotes the GTP-dependent binding of aminoacyl-tRNA to the A-site of ribosomes during protein biosynthesis. This chain is Elongation factor Tu, found in Jannaschia sp. (strain CCS1).